Here is a 780-residue protein sequence, read N- to C-terminus: ATP-dependent 6-phosphofructokinase, muscle type (780 aa).

Thr-2 is modified (N-acetylthreonine). Positions 2 to 390 (THEEHHAAKT…NWEVYKLLAH (389 aa)) are N-terminal catalytic PFK domain 1. Residues Gly-25, 88–89 (RC), and 118–121 (GDGS) contribute to the ATP site. Residue Asp-119 coordinates Mg(2+). Ser-133 is subject to Phosphoserine. Substrate contacts are provided by residues 164-166 (SID), Arg-201, 208-210 (MGR), Glu-264, Arg-292, and 298-301 (HVQR). Asp-166 serves as the catalytic Proton acceptor. Ser-377 is modified (phosphoserine). The segment at 391–401 (VRPPVSKSGSH) is interdomain linker. Positions 402–780 (TVAVMNVGAP…TRKRSGEGAV (379 aa)) are C-terminal regulatory PFK domain 2. Residues Arg-471 and 528–532 (TVSNN) contribute to the beta-D-fructose 2,6-bisphosphate site. Residue Ser-530 is glycosylated (O-linked (GlcNAc) serine). Position 557 is an N6-(2-hydroxyisobutyryl)lysine (Lys-557). Beta-D-fructose 2,6-bisphosphate contacts are provided by residues Arg-566, 573-575 (MGG), Glu-629, Arg-655, and 661-664 (HMQQ). The residue at position 667 (Ser-667) is a Phosphoserine. Arg-735 lines the beta-D-fructose 2,6-bisphosphate pocket. Ser-775 carries the post-translational modification Phosphoserine.

The protein belongs to the phosphofructokinase type A (PFKA) family. ATP-dependent PFK group I subfamily. Eukaryotic two domain clade 'E' sub-subfamily. In terms of assembly, homo- and heterotetramers. Phosphofructokinase (PFK) enzyme functions as a tetramer composed of different combinations of 3 types of subunits, called PFKM (M), PFKL (L) and PFKP (P). The composition of the PFK tetramer differs according to the tissue type it is present in. The kinetic and regulatory properties of the tetrameric enzyme are dependent on the subunit composition, hence can vary across tissues. Interacts (via C-terminus) with HK1 (via N-terminal spermatogenic cell-specific region). The cofactor is Mg(2+). GlcNAcylation decreases enzyme activity.

It is found in the cytoplasm. The catalysed reaction is beta-D-fructose 6-phosphate + ATP = beta-D-fructose 1,6-bisphosphate + ADP + H(+). It functions in the pathway carbohydrate degradation; glycolysis; D-glyceraldehyde 3-phosphate and glycerone phosphate from D-glucose: step 3/4. Its activity is regulated as follows. Allosterically activated by ADP, AMP, or fructose 2,6-bisphosphate, and allosterically inhibited by ATP or citrate. Catalyzes the phosphorylation of D-fructose 6-phosphate to fructose 1,6-bisphosphate by ATP, the first committing step of glycolysis. The sequence is that of ATP-dependent 6-phosphofructokinase, muscle type (PFKM) from Macaca fascicularis (Crab-eating macaque).